We begin with the raw amino-acid sequence, 754 residues long: 1,4-alpha-glucan branching enzyme GlgB (754 aa).

Aspartate 431 serves as the catalytic Nucleophile. Glutamate 484 acts as the Proton donor in catalysis.

This sequence belongs to the glycosyl hydrolase 13 family. GlgB subfamily. Monomer.

It carries out the reaction Transfers a segment of a (1-&gt;4)-alpha-D-glucan chain to a primary hydroxy group in a similar glucan chain.. It participates in glycan biosynthesis; glycogen biosynthesis. In terms of biological role, catalyzes the formation of the alpha-1,6-glucosidic linkages in glycogen by scission of a 1,4-alpha-linked oligosaccharide from growing alpha-1,4-glucan chains and the subsequent attachment of the oligosaccharide to the alpha-1,6 position. This chain is 1,4-alpha-glucan branching enzyme GlgB, found in Prochlorococcus marinus (strain MIT 9515).